The chain runs to 356 residues: Fructose-1,6-bisphosphatase class 1 (356 aa).

Positions 1 to 26 are disordered; it reads MAREWPMTHPSNHPMDHHHQTLQAHL. The Mg(2+) site is built by Glu-101, Asp-120, Leu-122, and Asp-123. Substrate is bound by residues 123–126 and Asn-211; that span reads DGSS. Glu-283 serves as a coordination point for Mg(2+).

Belongs to the FBPase class 1 family. In terms of assembly, homotetramer. It depends on Mg(2+) as a cofactor.

The protein localises to the cytoplasm. It carries out the reaction beta-D-fructose 1,6-bisphosphate + H2O = beta-D-fructose 6-phosphate + phosphate. The protein operates within carbohydrate biosynthesis; Calvin cycle. This chain is Fructose-1,6-bisphosphatase class 1, found in Bradyrhizobium sp. (strain ORS 278).